Consider the following 367-residue polypeptide: Anhydro-N-acetylmuramic acid kinase (367 aa).

13–20 (GTSMDGAD) is an ATP binding site.

It belongs to the anhydro-N-acetylmuramic acid kinase family.

The enzyme catalyses 1,6-anhydro-N-acetyl-beta-muramate + ATP + H2O = N-acetyl-D-muramate 6-phosphate + ADP + H(+). Its pathway is amino-sugar metabolism; 1,6-anhydro-N-acetylmuramate degradation. It participates in cell wall biogenesis; peptidoglycan recycling. Functionally, catalyzes the specific phosphorylation of 1,6-anhydro-N-acetylmuramic acid (anhMurNAc) with the simultaneous cleavage of the 1,6-anhydro ring, generating MurNAc-6-P. Is required for the utilization of anhMurNAc either imported from the medium or derived from its own cell wall murein, and thus plays a role in cell wall recycling. This Neisseria gonorrhoeae (strain ATCC 700825 / FA 1090) protein is Anhydro-N-acetylmuramic acid kinase.